The sequence spans 699 residues: Putative inactive kinesin-like protein KIN-7B (699 aa).

A Kinesin motor domain is found at 1 to 170 (MRAIQKKSLC…LLFGSCAKEV (170 aa)). A coiled-coil region spans residues 179–247 (VMSDKALVKH…QSRLQDLLQS (69 aa)). Residues 249–345 (GDHDLNRQVQ…VNSRHSRPSG (97 aa)) form a disordered region. Residues 264-275 (RSPPSVGMPPSV) are compositionally biased toward low complexity. Positions 276–298 (SRDDSSQVSHDDSDLYKEVRCIE) are enriched in basic and acidic residues. The segment covering 313–338 (GESSSPQDSNMNSGLHGNDSNASVNS) has biased composition (polar residues).

This sequence belongs to the TRAFAC class myosin-kinesin ATPase superfamily. Kinesin family. KIN-7 subfamily.

This chain is Putative inactive kinesin-like protein KIN-7B, found in Oryza sativa subsp. japonica (Rice).